A 187-amino-acid polypeptide reads, in one-letter code: Adenine phosphoribosyltransferase (187 aa).

Belongs to the purine/pyrimidine phosphoribosyltransferase family. Homodimer.

The protein localises to the cytoplasm. It carries out the reaction AMP + diphosphate = 5-phospho-alpha-D-ribose 1-diphosphate + adenine. The protein operates within purine metabolism; AMP biosynthesis via salvage pathway; AMP from adenine: step 1/1. Its function is as follows. Catalyzes a salvage reaction resulting in the formation of AMP, that is energically less costly than de novo synthesis. In Yersinia pseudotuberculosis serotype O:3 (strain YPIII), this protein is Adenine phosphoribosyltransferase.